The following is a 176-amino-acid chain: Ribosome maturation factor RimM (176 aa).

The region spanning 100 to 173 (KDEYHYHDLI…WLLINPPPGL (74 aa)) is the PRC barrel domain.

The protein belongs to the RimM family. Binds ribosomal protein uS19.

Its subcellular location is the cytoplasm. In terms of biological role, an accessory protein needed during the final step in the assembly of 30S ribosomal subunit, possibly for assembly of the head region. Essential for efficient processing of 16S rRNA. May be needed both before and after RbfA during the maturation of 16S rRNA. It has affinity for free ribosomal 30S subunits but not for 70S ribosomes. In Prochlorococcus marinus (strain NATL1A), this protein is Ribosome maturation factor RimM.